A 400-amino-acid chain; its full sequence is NADH-quinone oxidoreductase subunit D (400 aa).

Belongs to the complex I 49 kDa subunit family. NDH-1 is composed of 14 different subunits. Subunits NuoB, C, D, E, F, and G constitute the peripheral sector of the complex.

It localises to the cell inner membrane. The catalysed reaction is a quinone + NADH + 5 H(+)(in) = a quinol + NAD(+) + 4 H(+)(out). Its function is as follows. NDH-1 shuttles electrons from NADH, via FMN and iron-sulfur (Fe-S) centers, to quinones in the respiratory chain. The immediate electron acceptor for the enzyme in this species is believed to be a menaquinone. Couples the redox reaction to proton translocation (for every two electrons transferred, four hydrogen ions are translocated across the cytoplasmic membrane), and thus conserves the redox energy in a proton gradient. The chain is NADH-quinone oxidoreductase subunit D from Chlorobaculum tepidum (strain ATCC 49652 / DSM 12025 / NBRC 103806 / TLS) (Chlorobium tepidum).